Reading from the N-terminus, the 172-residue chain is Small ribosomal subunit protein uS5 (172 aa).

The S5 DRBM domain maps to 7–70; that stretch reads VVEHLVNVNR…QNAKKYMIEV (64 aa).

It belongs to the universal ribosomal protein uS5 family. Part of the 30S ribosomal subunit. Contacts proteins S4 and S8.

Its function is as follows. With S4 and S12 plays an important role in translational accuracy. In terms of biological role, located at the back of the 30S subunit body where it stabilizes the conformation of the head with respect to the body. The chain is Small ribosomal subunit protein uS5 from Orientia tsutsugamushi (strain Boryong) (Rickettsia tsutsugamushi).